Consider the following 514-residue polypeptide: Ribonuclease Y (514 aa).

Residues 3–23 (VLWMVLGLAIGIAVGAAAGYI) form a helical membrane-spanning segment. One can recognise a KH domain in the interval 203–266 (TVKAVELPSD…EVARIAMERL (64 aa)). An HD domain is found at 330–423 (VLAHSVEVAN…VATADAVSAA (94 aa)).

The protein belongs to the RNase Y family.

The protein localises to the cell membrane. In terms of biological role, endoribonuclease that initiates mRNA decay. This is Ribonuclease Y from Rubrobacter xylanophilus (strain DSM 9941 / JCM 11954 / NBRC 16129 / PRD-1).